Here is an 89-residue protein sequence, read N- to C-terminus: Small ribosomal subunit protein uS17 (89 aa).

This sequence belongs to the universal ribosomal protein uS17 family. As to quaternary structure, part of the 30S ribosomal subunit.

Its function is as follows. One of the primary rRNA binding proteins, it binds specifically to the 5'-end of 16S ribosomal RNA. In Polynucleobacter asymbioticus (strain DSM 18221 / CIP 109841 / QLW-P1DMWA-1) (Polynucleobacter necessarius subsp. asymbioticus), this protein is Small ribosomal subunit protein uS17.